Consider the following 87-residue polypeptide: Small ribosomal subunit protein uS15 (87 aa).

A disordered region spans residues 1-22 (MSEINKAEIVASNARAPSDTGS).

The protein belongs to the universal ribosomal protein uS15 family. In terms of assembly, part of the 30S ribosomal subunit. Forms a bridge to the 50S subunit in the 70S ribosome, contacting the 23S rRNA.

In terms of biological role, one of the primary rRNA binding proteins, it binds directly to 16S rRNA where it helps nucleate assembly of the platform of the 30S subunit by binding and bridging several RNA helices of the 16S rRNA. Its function is as follows. Forms an intersubunit bridge (bridge B4) with the 23S rRNA of the 50S subunit in the ribosome. In Leptothrix cholodnii (strain ATCC 51168 / LMG 8142 / SP-6) (Leptothrix discophora (strain SP-6)), this protein is Small ribosomal subunit protein uS15.